Consider the following 766-residue polypeptide: Single-minded homolog 1 (766 aa).

One can recognise a bHLH domain in the interval 1-53 (MKEKSKNAARTRREKENSEFYELAKLLPLPSAITSQLDKASIIRLTTSYLKMR). PAS domains lie at 77–147 (GREL…QPYH) and 218–288 (PPSA…LVKG). A PAC domain is found at 292 to 335 (TKYYRFLAKHGGWVWVQSYATIVHNSRSSRPHCIVSVNYVLTDT). Residues 336 to 766 (EYKGLQLSLD…GTSVIITNGS (431 aa)) enclose the Single-minded C-terminal domain. Residues 353–365 (AFSYTSSSTPTMT) show a composition bias toward polar residues. Disordered regions lie at residues 353 to 431 (AFSY…SQHD) and 528 to 563 (WDEDSVVSSPDPGSASESGDRYRTEQYQSSPHEPSK). The short motif at 368 to 387 (RKGAKSRLSSSKSKSRTSPY) is the Nuclear localization signal element. Residues 373 to 385 (SRLSSSKSKSRTS) are compositionally biased toward low complexity. The span at 394–404 (HTERSESDHDS) shows a compositional bias: basic and acidic residues.

In terms of assembly, efficient DNA binding requires dimerization with another bHLH protein. Heterodimer; forms a heterodimer with ARNT, ARNT2.

The protein localises to the nucleus. Its function is as follows. Transcriptional factor that may have pleiotropic effects during embryogenesis and in the adult. This chain is Single-minded homolog 1 (SIM1), found in Homo sapiens (Human).